Here is a 106-residue protein sequence, read N- to C-terminus: UPF0060 membrane protein Bxeno_B1021 (106 aa).

4 helical membrane-spanning segments follow: residues 2–22, 30–50, 58–78, and 82–102; these read KTFLLYAVTAVAEIVGCYLPW, SIWLLVPGALSLALFAWLLTL, VYAAYGGVYVAVAIAWLWCVD, and PTLWDAAGVVFTLAGMAIIAF.

This sequence belongs to the UPF0060 family.

The protein localises to the cell inner membrane. The polypeptide is UPF0060 membrane protein Bxeno_B1021 (Paraburkholderia xenovorans (strain LB400)).